The sequence spans 3146 residues: Bassianolide nonribosomal cyclodepsipeptide synthetase (3146 aa).

The span at 1-12 (MEPPNNANTGQL) shows a compositional bias: polar residues. Residues 1–23 (MEPPNNANTGQLGPTLPNGTVDL) are disordered. The tract at residues 69 to 454 (HVVYEIPEDV…INKLQSTDGS (386 aa)) is condensation 1. The tract at residues 495-887 (GDTPNKPAVC…GRMDSQVKIR (393 aa)) is adenylation 1. The Carrier 1 domain occupies 1015–1091 (PDASAGVTKL…SLQAAIGGSS (77 aa)). O-(pantetheine 4'-phosphoryl)serine is present on Ser1052. A condensation 2 region spans residues 1109–1538 (SYSQGRLWFL…QTLISVVPLT (430 aa)). An adenylation 2 region spans residues 1567-1973 (FRTQVASYPD…GRMDFQFKIR (407 aa)). The segment at 2041 to 2181 (TYTELDTVSS…FPTRDYLERV (141 aa)) is S-adenosyl-L-methionine-dependent N-methyltransferase (MT). Carrier domains lie at 2514–2588 (FPLS…RQQL) and 2614–2688 (APTT…EVSQ). O-(pantetheine 4'-phosphoryl)serine occurs at positions 2548 and 2648. Residues 2734–3138 (QDVYLATHLQ…THLMEQVCNT (405 aa)) form a condensation 3 region.

The protein belongs to the NRP synthetase family.

It carries out the reaction 4 (R)-2-hydroxy-3-methylbutanoate + 4 L-leucine + 4 S-adenosyl-L-methionine + 8 ATP = bassianolide + 8 AMP + 4 S-adenosyl-L-homocysteine + 8 diphosphate + 8 H(+). In terms of biological role, bassianolide nonribosomal synthetase that mediates the biosynthesis of bassianolide (BSL), a non-ribosomal cyclodepsipeptide that shows insecticidal and cancer cell antiproliferative activity. BSLS first catalyzes the iterative synthesis of an enzyme-bound dipeptidol monomer intermediate from D-2-hydroxyisovalerate and L-leucine before performing the condensation and cyclization of 4 dipeptidol monomers to yield the cyclic tetrameric ester bassianolide. The N-methyltransferase MT domain is responsible for the methylation of the leucine residues of bassianolide. BSLS is flexible with both the amino acid and hydroxyl acid precursors, and produces bassianolide as the major product (containing N-methyl-L-Leu), together with small amounts of beauvericin and its analogs beauvericins A-C (containing N-methyl-L-Phe). The polypeptide is Bassianolide nonribosomal cyclodepsipeptide synthetase (Beauveria bassiana (White muscardine disease fungus)).